The following is a 361-amino-acid chain: MQTLADLLNTIPAIDPAAMSRAQRHIDGLLKPVGSLGRLEALAIQLAGMPGLNGIPHVGKKAVLVMCADHGVWEEGVAISPKEVTAIQAENMTRGTTGVCVLAAQAGANVHVVDVGIDSAEPIPGLINMRVARGSGNIASAPAMSRRQAEKLLLDVICYTRELAKNGVTLFGVGELGMANTTPAAAAAIVSTITGRDPEEVVGIGANLPTDKLANKIDVVRRAITLNQPNPQDGVDVLAKVGGFDLVGMAGVMLGAASCGLPVLLDGFLSYAAALAACQMSPAIKPYLIPSHLSAEKGARIALSHLGLEPYLNMEMRLGEGSGAALAMPIIEAACAIYNNMGELAASNIVLPGNTTSDLNS.

Catalysis depends on E320, which acts as the Proton acceptor.

The protein belongs to the CobT family. Homodimer.

It catalyses the reaction 5,6-dimethylbenzimidazole + nicotinate beta-D-ribonucleotide = alpha-ribazole 5'-phosphate + nicotinate + H(+). It functions in the pathway nucleoside biosynthesis; alpha-ribazole biosynthesis; alpha-ribazole from 5,6-dimethylbenzimidazole: step 1/2. In terms of biological role, catalyzes the synthesis of alpha-ribazole-5'-phosphate from nicotinate mononucleotide (NAMN) and 5,6-dimethylbenzimidazole (DMB). The polypeptide is Nicotinate-nucleotide--dimethylbenzimidazole phosphoribosyltransferase (Shigella boydii serotype 18 (strain CDC 3083-94 / BS512)).